The sequence spans 424 residues: Serine--tRNA ligase (424 aa).

229–231 is a binding site for L-serine; that stretch reads TAE. ATP contacts are provided by residues 260–262 and valine 276; that span reads RKE. L-serine is bound at residue glutamate 283. ATP is bound at residue 347–350; it reads ELVS. Residue threonine 383 coordinates L-serine.

It belongs to the class-II aminoacyl-tRNA synthetase family. Type-1 seryl-tRNA synthetase subfamily. Homodimer. The tRNA molecule binds across the dimer.

It localises to the cytoplasm. The catalysed reaction is tRNA(Ser) + L-serine + ATP = L-seryl-tRNA(Ser) + AMP + diphosphate + H(+). The enzyme catalyses tRNA(Sec) + L-serine + ATP = L-seryl-tRNA(Sec) + AMP + diphosphate + H(+). Its pathway is aminoacyl-tRNA biosynthesis; selenocysteinyl-tRNA(Sec) biosynthesis; L-seryl-tRNA(Sec) from L-serine and tRNA(Sec): step 1/1. Functionally, catalyzes the attachment of serine to tRNA(Ser). Is also able to aminoacylate tRNA(Sec) with serine, to form the misacylated tRNA L-seryl-tRNA(Sec), which will be further converted into selenocysteinyl-tRNA(Sec). This chain is Serine--tRNA ligase, found in Methanosphaera stadtmanae (strain ATCC 43021 / DSM 3091 / JCM 11832 / MCB-3).